The primary structure comprises 276 residues: Putative translation initiation factor eIF-2B subunit 2-like (276 aa).

This sequence belongs to the eIF-2B alpha/beta/delta subunits family. As to quaternary structure, complex of two different subunits.

Functionally, catalyzes the exchange of initiation factor 2-bound GDP for GTP. This Pyrococcus horikoshii (strain ATCC 700860 / DSM 12428 / JCM 9974 / NBRC 100139 / OT-3) protein is Putative translation initiation factor eIF-2B subunit 2-like.